A 197-amino-acid polypeptide reads, in one-letter code: RNA pyrophosphohydrolase (197 aa).

One can recognise a Nudix hydrolase domain in the interval 6–150 (GYRPNVGIVI…KRDVYRKVMR (145 aa)). The Nudix box signature appears at 38–59 (GGINEGENIETAMYRELYEEVG).

This sequence belongs to the Nudix hydrolase family. RppH subfamily. A divalent metal cation serves as cofactor.

Accelerates the degradation of transcripts by removing pyrophosphate from the 5'-end of triphosphorylated RNA, leading to a more labile monophosphorylated state that can stimulate subsequent ribonuclease cleavage. The protein is RNA pyrophosphohydrolase of Haemophilus ducreyi (strain 35000HP / ATCC 700724).